Reading from the N-terminus, the 103-residue chain is MYAIIETGGKQYRVQEGDTLFVEKLDANQGDIVTIDSVLAVSKDGNLTVGAPMVAGAKVEAKVLEQGKAKKIIIFKYKPKKDYRRKQGHRQPYTKLVIEKINA.

This sequence belongs to the bacterial ribosomal protein bL21 family. As to quaternary structure, part of the 50S ribosomal subunit. Contacts protein L20.

In terms of biological role, this protein binds to 23S rRNA in the presence of protein L20. This chain is Large ribosomal subunit protein bL21, found in Alkaliphilus oremlandii (strain OhILAs) (Clostridium oremlandii (strain OhILAs)).